A 50-amino-acid polypeptide reads, in one-letter code: Cuticle protein CP498 (50 aa).

Tandem repeats lie at residues 6–23 (ATVG…LIQL) and 30–47 (ILEG…FVTY).

Calcified shell.

This chain is Cuticle protein CP498, found in Cancer pagurus (Rock crab).